A 382-amino-acid chain; its full sequence is O-methyltransferase okaF (382 aa).

Positions 249 and 287 each coordinate S-adenosyl-L-methionine. Residue H291 is the Proton acceptor of the active site.

It belongs to the class I-like SAM-binding methyltransferase superfamily. Cation-independent O-methyltransferase family.

It carries out the reaction 3-desmethyl okaramine B + S-adenosyl-L-methionine = okaramine B + S-adenosyl-L-homocysteine + H(+). Its pathway is alkaloid biosynthesis. Functionally, O-methyltransferase; part of the gene cluster that mediates the biosynthesis of okaramine B, a prenylated indole alkaloid that possesses an unusual octacyclic ring system, including a four-membered azetidine ring and an eight-membered azocine ring, and that exhibits insecticidal activity against silkworm larvae. Within the pathway, okaF catalyzes the last step which is the methylation of 3-desmethyl okaramine B to produce okaramine B. With okaG, OkaF is also able to produce okaramine D from okaramine E. The biosynthesis begins with the NRPS okaA that condenses two tryptophan molecules into cyclo(L-Trp-L-Trp). Prenylation by the prenyltransferase okaC then leads to the formation of cyclo(N8-(alpha,alpha-dimethylallyl)-L-Trp-6a-(alpha,alpha-dime-thylallyl)-L-Trp). This is followed by indole 2,3-epoxidation by the FAD-dependent monooxygenase okaB to facilitate the formation of the hexahydropyrrolo[2,3-b]indole (HPI) moiety of okaramine C. The cytochrome P450 monooxygenase okaD then likely catalyzes formation of the eight-membered ring of okaramine A. The dioxygenase okaE further forms the unusual 2-dimethyl-3-methyl-azetidine ring to yield 12-deshydroxyl okaramine E, as well as the hydroxylation of 12-deshydroxyl okaramine E to produce okaramine E. The cytochrome P450 monoxygenase okaG converts 12-deshydroxyl okaramine E into 3-desmethyl okaramine B which is further methylated by the methyltransferase okaF into okaramine B. In a shunt pathway, okaG and okaF together are also able to convert okaramine E into okaramine D. Okaramine H is produced by nonenzymatic conversion from okaramine A. This is O-methyltransferase okaF from Penicillium ochrochloron.